The chain runs to 3898 residues: MELITNELLYKTYKQKPVGVEEPVYDQAGNPLFGERGAIHPQSTLKLPHKRGERNVPTSLASLPKRGDCRSGNSKGPVSGIYLKPGPLFYQDYKGPVYHRAPLELFEEGSMCETTKRIGRVTGSDGKLYHIYICIDGCITVKSATRSHQRVLRWVHNRLDCPLWVTSCSDTKEEGATKKKQQKPDRLEKGRMKIVPKESEKDSKTKPPDATIVVDGVKYQVKKKGKVKSKNTQDGLYHNKNKPPESRKKLEKALLAWAILAVVLIEVTMGENITQWNLQDNGTEGIQRAMFQRGVNRSLHGIWPEKICTGVPSHLATDVELKTIHGMMDASEKTNYTCCRLQRHEWNKHGWCNWYNIEPWILIMNRTQANLTEGQPPRECAVTCRYDRDSDLNVVTQARDSPTPLTGCKKGKNFSFAGVLTRGPCNFEIAASDVLFKEHECTGVFQDTAHYLVDGVTNSLESARQGTAKLTTWLGKQLGILGKKLENKSKTWFGAYAASPYCDVDRKIGYIWFTKNCTPACLPKNTKIIGPGKFDTNAEDGKILHEMGGHLSEVLLLSLVVLSDFAPETASAMYLILHFSIPQSHVDITDCDKTQLNLTIELTTADVIPGSVWNLGKYVCIRPDWWPYETAAVLAFEEVGQVVKIVLRALRDLTRIWNAATTTAFLVCLIKMVRGQVVQGILWLLLITGVQGHLDCKPEYSYAIAKNDRVGPLGAEGLTTVWKDYSHEMKLEDTMVIAWCKGGKFTYLSRCTRETRYLAILHSRALPTSVVFKKLFEGQKQEDTVEMDDDFEFGLCPCDAKPIVRGKFNTTLLNGPAFQMVCPIGWTGTVSCMLANRDTLDTAVVRTYRRSVPFPYRQGCITQKTLGEDLYDCALGGNWTCVTGDQSRYTGGLIESCKWCGYKFQKSEGLPHYPIGKCRLNNETGYRLVDDTSCDREGVAIVPHGLVKCKIGDTTVQVIATDTKLGPMPCKPHEIISSEGPIEKTACTFNYTRTLKNKYFEPRDSYFQQYMLKGDYQYWFDLEVTDHHRDYFAESILVVVVALLGGRYVLWLLVTYMVLSEQKASGAQYGAGEVVMMGNLLTHDNVEVVTYFFLLYLLLREESVKKWVLLLYHILVAHPLKSVIVILLMIGDVVKADPGGQGYLGQIDVCFTMVVIIIIGLIIARRDPTIVPLITIVASLRVTGLTYSPGVDAAMAVITITLLMVSYVTDYFRYKRWLQCILSLVSGVFLIRCLIHLGRIETPEVTIPNWRPLTLILFYLISTTVVTMWKIDLAGLLLQGVPILLLITTLWADFLTLILILPTYELVKLYYLKTIKTDIEKSWLGGLDYKRVDSIYDVDESGEGVYLFPSRQKAQKNFSMLLPLVRATLISCVSSKWQLIYMAYLSVDFMYYMHRKVIEEISGGTNMISRIVAALIELNWSMEEEESKGLKKFYLLSGRLRNLIIKHKVRNETVAGWYGEEEVYGMPKIMTIIKASTLNKNKHCIICTVCEGRKWKGGTCPKCGRHGKPITCGMSLADFEERHYKRIFIREGNFEGPFRQEYNGFIQYTARGQLFLRNLPILATKVKMLMVGNLGEEVGDLEHLGWILRGPAVCKKITEHERCHINILDKLTAFFGIMPRGTTPRAPVRFPTSLLKVRRGLETGWAYTHQGGISSVDHVTAGKDLLVCDSMGRTRVVCQSNNKLTDETEYGVKTDSGCPDGARCYVLNPEAVNISGSKGAVVHLQKTGGEFTCVTASGTPAFFDLKNLKGWSGLPIFEASSGRVVGRVKVGKNEESKPTKIMSGIQTVSKNTADLTEMVKKITSMNRGDFKQITLATGAGKTTELPKAVIEEIGRHKRVLVLIPLRAAAESVYQYMRLKHPSISFNLRIGDMKEGDMATGITYASYGYFCQMPQPKLRAAMVEYSYIFLDEYHCATPEQLAIIGKIHRFSESIRVVAMTATPAGSVTTTGQKHPIEEFIAPEVMEGEDLGSQFLDIAGLKIPVDEMKGNMLVFVPTRNMAVEVAKKLKAKGYNSGYYYSGEDPANLRVVTSQSPYVIVATNAIESGVTLPDLDTVVDTGLKCEKRVRVSSKIPFIVTGLKRMAVTVGEQAQRRGRVGRVKPGRYYRSQETATGSKDYHYDLLQAQRYGIEDGINVTKSFREMNYDWSLYEEDSLLITQLEILNNLLISEDLPAAVKNIMARTDHPEPIQLAYNSYEVQVPVLFPKIRNGEVTDTYENYSFLNARKLGEDVPVYIYATEDEDLAVDLLGLDWPDPGNQQVVETGKALKQVAGLSSAENALLVALFGYVGYQALSKRHVPMITDIYTIEDQRLEDTTHLQYAPNAIKTEGTETELKELASGDVEKIMGAISDYAAGGLDFVKSQAEKIKTAPLFKENVEAARGYVQKLIDSLIEDKDVIIRYGLWGTHTALYKSIAARLGHETAFATLVLKWLAFGGETVSDHIRQAAVDLVVYYVMNKPSFPGDTETQQEGRRFVASLFISALATYTYKTWNYNNLSKVVEPALAYLPYATSALKMFTPTRLESVVILSTTIYKTYLSIRKGKSDGLLGTGISAAMEILSQNPVSVGISVMLGVGAIAAHNAIESSEQKRTLLMKVFVKNFLDQAATDELVKENPEKIIMALFEAVQTIGNPLRLIYHLYGVYYKGWEAKELSERTAGRNLFTLIMFEAFELLGMDSEGKIRNLSGNYILDLIHGLHKQINRGLKKIVLGWAPAPFSCDWTPSDERIRLPTDSYLRVETKCPCGYEMKALKNVSGKLTKVEESGPFLCRNRPGRGPVNYRVTKYYDDNLREIRPVAKLEGQVEHYYKGVTARIDYSKGKTLLATDKWEVEHGTLTRLTKRYTGVGFRGAYLGDEPNHRDLVERDCATITKNTVQFLKMKKGCAFTYDLTISNLTRLIELVHRNNLEEKEIPTATVTTWLAYTFVNEDVGTIKPVLGERVIPDPVVDINLQPEVQVDTSEVGITIIGKEAVMTTGVTPVMEKVEPDTDNNQSSVKIGLDEGNYPGPGVQTHTLVEEIHNKDARPFIMVLGSKSSMSNRAKTARNINLYTGNDPREIRDLMAEGRILVVALRDIDPDLSELVDFKGTFLDREALEALSLGQPKPKQVTKAAIRDLLKEERQVEIPDWFTSDDPVFLDIAMKKDKYHLIGDVVEVKDQAKALGATDQTRIVKEVGSRTYTMKLSSWFLQASSKQMSLTPLFEELLLRCPPATKSNKGHMASAYQLAQGNWEPLGCGVHLGTVPARRVKMHPYEAYLKLKDLVEEEEKKPRIRDTVIREHNKWILKKIKFQGNLNTKKMLNPGKLSEQLDREGHKRNIYNNQISTVMSSAGIRLEKLPIVRAQTDTKSFHEAIRDKIDKNENRQNPELHNKLLEIFHTIADPSLKHTYGEVTWEQLEAGINRKGAAGFLEKKNIGEVLDSEKHLVEQLVRDLKAGRKIRYYETAIPKNEKRDVSDDWQAGDLVDEKKPRVIQYPEAKTRLAITKVMYNWVKQQPVVIPGYEGKTPLFNIFNKVRKEWDLFNEPVAVSFDTKAWDTQVTSRDLHLIGEIQKYYYRKEWHKFIDTITDHMVEVPVITADGEVYIRNGQRGSGQPDTSAGNSMLNVLTMIYAFCESTGVPYKSFNRVAKIHVCGDDGFLITEKGLGLKFSNKGMQILHEAGKPQKLTEGEKMKVAYKFEDIEFCSHTPVPVRWSDNTSSYMAGRDTAVILSKMATRLDSSGERGTTAYEKAVAFSFLLMYSWNPLVRRICLLVLSQRPETAPSTQTTYYYKGDPIGAYKDVIGRNLSELKRTGFEKLANLNLSLSTLGIWTKHTSKRIIQDCVAIGKEEGNWLVNADRLISSKTGHLYIPDKGFTLQGKHYEQLQLGAETNPVMGVGTERYKLGPIVNLLLRRLKVLLMAAVGASS.

The 168-residue stretch at 1-168 (MELITNELLY…LDCPLWVTSC (168 aa)) folds into the Peptidase C53 domain. Disordered regions lie at residues 47-72 (LPHK…CRSG), 172-209 (KEEG…KPPD), and 223-245 (KKGK…KPPE). Residues H49 and C69 each act as for N-terminal protease activity in the active site. A compositionally biased stretch (basic and acidic residues) spans 172–207 (KEEGATKKKQQKPDRLEKGRMKIVPKESEKDSKTKP). 4 N-linked (GlcNAc...) asparagine; by host glycosylation sites follow: N272, N281, N296, and N335. Disulfide bonds link C308–C352 and C338–C339. Active-site for E(rns) glycoprotein RNase activity residues include H344, E345, K348, and H349. N-linked (GlcNAc...) asparagine; by host glycosylation is found at N365 and N370. 2 cysteine pairs are disulfide-bonded: C380–C425 and C384–C408. N413, N487, and N597 each carry an N-linked (GlcNAc...) asparagine; by host glycan. Over 498–666 (ASPYCDVDRK…WNAATTTAFL (169 aa)) the chain is Lumenal. A helical transmembrane segment spans residues 667-687 (VCLIKMVRGQVVQGILWLLLI). The Lumenal segment spans residues 688–1035 (TGVQGHLDCK…DHHRDYFAES (348 aa)). 2 cysteine pairs are disulfide-bonded: C696-C740 and C751-C798. 4 N-linked (GlcNAc...) asparagine; by host glycosylation sites follow: N809, N878, N922, and N990. 8 helical membrane-spanning segments follow: residues 1036–1056 (ILVV…LVTY), 1079–1099 (NLLT…YLLL), 1108–1128 (VLLL…VILL), 1144–1164 (LGQI…LIIA), 1189–1209 (PGVD…SYVT), 1217–1237 (WLQC…LIHL), 1247–1267 (IPNW…TVVT), and 1281–1301 (VPIL…ILIL). N-linked (GlcNAc...) asparagine; by host glycosylation is present at N1357. Residues 1360–1380 (MLLPLVRATLISCVSSKWQLI) traverse the membrane as a helical segment. A glycan (N-linked (GlcNAc...) asparagine; by host) is linked at N1419. One can recognise a Peptidase C74 domain in the interval 1441–1589 (RNLIIKHKVR…DLEHLGWILR (149 aa)). The active-site For cysteine protease NS2 activity is H1447. N1451 carries N-linked (GlcNAc...) asparagine; by host glycosylation. Catalysis depends on for cysteine protease NS2 activity residues E1461 and C1512. The chain crosses the membrane as a helical span at residues 1568–1588 (MLMVGNLGEEVGDLEHLGWIL). In terms of domain architecture, Peptidase S31 spans 1590 to 1763 (GPAVCKKITE…LPIFEASSGR (174 aa)). Active-site charge relay system; for serine protease NS3 activity residues include H1658 and D1695. N-linked (GlcNAc...) asparagine; by host glycosylation occurs at N1713. S1752 acts as the Charge relay system; for serine protease NS3 activity in catalysis. The Helicase ATP-binding domain maps to 1802-1960 (ITSMNRGDFK…QKHPIEEFIA (159 aa)). An ATP-binding site is contributed by 1815–1822 (LATGAGKT). Positions 1910–1913 (DEYH) match the DEAH box motif. Residues 1978–2143 (GLKIPVDEMK…NVTKSFREMN (166 aa)) form the Helicase C-terminal domain. N2134, N2217, N2494, N2682, N2751, N2891, and N2988 each carry an N-linked (GlcNAc...) asparagine; by host glycan. GTP is bound by residues T3499 and L3501. One can recognise a RdRp catalytic domain in the interval 3518-3641 (PVAVSFDTKA…ITEKGLGLKF (124 aa)). Residue N3688 is glycosylated (N-linked (GlcNAc...) asparagine; by host). Positions 3696 and 3704 each coordinate GTP. N3777 and N3793 each carry an N-linked (GlcNAc...) asparagine; by host glycan.

It belongs to the pestivirus polyprotein family. In terms of assembly, homodimer; disulfide-linked. Homodimer; disulfide-linked. Heterodimer with E1; disulfide-linked. As to quaternary structure, interacts with host IFIH1/MDA5; this interaction is involved in the inhibition of IFN-beta production. Heavily glycosylated. Post-translationally, the viral RNA of pestiviruses is expressed as a single polyprotein which undergoes post-translational proteolytic processing resulting in the production of at least eleven individual proteins. The N-terminal protease cleaves itself from the nascent polyprotein autocatalytically and thereby generates the N-terminus of the adjacent viral capsid protein C. In terms of processing, cleavage between E2 and p7 is partial.

The protein localises to the virion. The protein resides in the host membrane. Its subcellular location is the virion membrane. It localises to the host endoplasmic reticulum membrane. It is found in the host cytoplasm. The enzyme catalyses Leu is conserved at position P1 for all four cleavage sites. Alanine is found at position P1' of the NS4A-NS4B cleavage site, whereas serine is found at position P1' of the NS3-NS4A, NS4B-NS5A and NS5A-NS5B cleavage sites.. The catalysed reaction is RNA(n) + a ribonucleoside 5'-triphosphate = RNA(n+1) + diphosphate. It catalyses the reaction a ribonucleoside 5'-triphosphate + H2O = a ribonucleoside 5'-diphosphate + phosphate + H(+). It carries out the reaction ATP + H2O = ADP + phosphate + H(+). The enzyme catalyses a ribonucleotidyl-ribonucleotide-RNA + H2O = a 3'-end 3'-phospho-ribonucleotide-RNA + a 5'-end dephospho-ribonucleoside-RNA + H(+). The catalysed reaction is a ribonucleotidyl-ribonucleotide-RNA = a 3'-end 2',3'-cyclophospho-ribonucleotide-RNA + a 5'-end dephospho-ribonucleoside-RNA. It catalyses the reaction a 3'-end 2',3'-cyclophospho-ribonucleotide-RNA + H2O = a 3'-end 3'-phospho-ribonucleotide-RNA + H(+). With respect to regulation, inhibited by Zn(2+), which binds the catalytic site. Leader cysteine autoprotease that cleaves itself from the nascent polyprotein during translation of the viral mRNA. Once released, plays a role in the inhibition of host innate immune response by interacting with host IRF3 and inducing its proteasomal degradation. Its function is as follows. Packages viral RNA to form a viral nucleocapsid and thereby protects viral RNA. Also plays a role in transcription regulation. Protects the incoming virus against IFN-induced effectors. Functionally, initial binding to target cell probably involves interaction of E(rns) with glycosaminoglycans. Also possesses intrinsic ribonuclease (RNase) activity that can inhibit the production of type I interferon and assist in the development of persistent infections. In terms of biological role, E1 and/or E2 are probably responsible of cell attachment with CD46 and subsequent fusion after internalization of the virion by endocytosis. E1 and/or E2 are probably responsible of cell attachment with CD46 and subsequent fusion after internalization of the virion by endocytosis. Probably functions as a coeffector of fusion providing structural integrity to the fusion complex and possibly controlling exposure of the fusion motif in E1. Its function is as follows. Plays an essential role in the virus replication cycle by acting as a viroporin. Forms ion conductive pores, which alters the cell permeability allowing the transport of ions and other small molecules. Forms a leader sequence to properly orient NS2 in the membrane. Functionally, uncleaved NS2-3 is required for production of infectious virus. In terms of biological role, plays a role in the regulation of viral RNA replication. Multifunctional protein that contains an N-terminal protease and a C-terminal helicase, playing essential roles in viral polyprotein processing and viral genome replication. The chymotrypsin-like serine protease activity utilizes NS4A as an essential cofactor and catalyzes the cleavage of the polyprotein leading to the release of NS4A, NS4B, NS5A, and NS5B. Interacts with NS5B to enhance RNA-dependent RNA polymerase activity. Its function is as follows. Acts as a cofactor for the NS3 protease activity. Functionally, induces a specific membrane alteration that serves as a scaffold for the virus replication complex. Plays a role in the inhibition of host innate immune response by inhibiting RIGI/IFIH1-mediated IFN-beta production. In terms of biological role, replicates the viral (+) and (-) genome. Initiates the primer-independent RNA replication via a de novo mechanism requiring GTP. This is Genome polyprotein from Bos taurus (Bovine).